The sequence spans 830 residues: P-selectin (830 aa).

An N-terminal signal peptide occupies residues 1 to 41 (MANCQIAILYQRFQRVVFGISQLLCFSALISELTNQKEVAA). At 42 to 771 (WTYHYSTKAY…QAGPLTIQEA (730 aa)) the chain is on the extracellular side. N-linked (GlcNAc...) asparagine glycosylation is found at Asn54 and Asn98. A C-type lectin domain is found at 58-158 (KYCQNRYTDL…HCLKKKHALC (101 aa)). 23 cysteine pairs are disulfide-bonded: Cys60-Cys158, Cys131-Cys150, Cys163-Cys174, Cys168-Cys183, Cys185-Cys194, Cys200-Cys244, Cys230-Cys257, Cys262-Cys306, Cys292-Cys319, Cys324-Cys368, Cys354-Cys381, Cys386-Cys430, Cys416-Cys443, Cys448-Cys492, Cys478-Cys505, Cys510-Cys554, Cys540-Cys567, Cys572-Cys616, Cys602-Cys629, Cys642-Cys686, Cys672-Cys699, Cys704-Cys748, and Cys734-Cys761. Ca(2+)-binding residues include Glu121, Asn123, and Asn124. Asn123 is an a carbohydrate binding site. Residues Glu133 and Asn146 each coordinate a carbohydrate. Ca(2+) contacts are provided by Asn146 and Asp147. One can recognise an EGF-like domain in the interval 159 to 195 (YTASCQDMSCSKQGECLETIGNYTCSCYPGFYGPECE). Residue Asn180 is glycosylated (N-linked (GlcNAc...) asparagine). Sushi domains lie at 198-259 (RECG…QCLA), 260-321 (AQCP…VCKA), 322-383 (VQCQ…TCEA), 384-445 (ISCE…VCQA), 446-507 (LQCQ…ECQA), 508-569 (IPCT…MCEA), 570-631 (IKCP…TCKG), 640-701 (VQCP…ACRA), and 702-763 (VKCS…TCQA). N-linked (GlcNAc...) asparagine glycosylation is found at Asn212 and Asn219. The N-linked (GlcNAc...) asparagine glycan is linked to Asn411. A glycan (N-linked (GlcNAc...) asparagine) is linked at Asn460. N-linked (GlcNAc...) asparagine glycosylation occurs at Asn518. Residue Asn665 is glycosylated (N-linked (GlcNAc...) asparagine). Asn716, Asn723, and Asn741 each carry an N-linked (GlcNAc...) asparagine glycan. A helical membrane pass occupies residues 772-795 (LTYFGGAVASTIGLIMGGTLLALL). The Cytoplasmic segment spans residues 796 to 830 (RKRFRQKDDGKCPLNPHSHLGTYGVFTNAAFDPSP). Cys807 is lipidated: S-palmitoyl cysteine; alternate. Residue Cys807 is the site of S-stearoyl cysteine; alternate attachment. An Endocytosis signal motif is present at residues 818 to 821 (YGVF). Positions 821–830 (FTNAAFDPSP) are interaction with SNX17.

Belongs to the selectin/LECAM family. As to quaternary structure, interacts with SNX17. Interacts with SELPLG/PSGL1 and PODXL2 and mediates neutrophil adhesion and leukocyte rolling. This interaction requires the sialyl-Lewis X epitope of SELPLG and PODXL2, and specific tyrosine sulfation on SELPLG. Interacts (via C-type lectin domain) with alpha-IIb/beta3 integrin ITGA2B:ITGB3 and alpha-V/beta-3 integrin ITGAV:ITGB3. Interacts with alpha5/beta1 integrin ITGA5:ITGB1 and alpha4/beta1 integrin ITGA4:ITGB. In terms of tissue distribution, stored in the alpha-granules of platelets and Weibel-Palade bodies of endothelial cells. Upon cell activation by agonists, P-selectin is transported rapidly to the cell surface.

It is found in the cell membrane. Functionally, ca(2+)-dependent receptor for myeloid cells that binds to carbohydrates on neutrophils and monocytes. Mediates the interaction of activated endothelial cells or platelets with leukocytes. The ligand recognized is sialyl-Lewis X. Mediates rapid rolling of leukocyte rolling over vascular surfaces during the initial steps in inflammation through interaction with SELPLG. Mediates cell-cell interactions and cell adhesion via the interaction with integrin alpha-IIb/beta3 (ITGA2B:ITGB3) and integrin alpha-V/beta-3 (ITGAV:ITGB3). This chain is P-selectin (SELP), found in Homo sapiens (Human).